We begin with the raw amino-acid sequence, 494 residues long: MANPQTTRVAVVGAGISGVLAAGHLLATGLEVTVFERNAAPGGVWYAIPFSGLLATREADAWARLYDERTPIEPSYPAMKPSKADPPATNEQETSRFMLQHAPPGPCYYNLQNNVPTPLLEVSLKPWPDGTPDTVRHDVIQRFIQDMSIEAKVHDVTRYEARVKKVVKDGAEWKITWSTPQVGLQSETSEFEQVSPFDVVIVASGHYHAPRVPDIPGLSDTKRKYGSRILHSKEYRRPENFRNKNILMIGGGVSSIDIANDISPFANTIYQSTRNSKFDLVESMLPENGVRVHEISHFEIQSHSDEPLSDDEPLPLTIHFESGQNLHGIHMIMLCTGYHITFPYLEEYHSDETTLQDADENILITDGTQVHNLYQDIFYIPDPTLVFVGLPYYTFTFSIFDFQAIVVAQVLSGTVQLPTETEMRSEYNAKVERVGLGKVFHSILGTEENYVHDLLTWVNTSRAAQELVAIKGFSPRWYEAKEALRQKYRAQVNK.

An N-terminal signal peptide occupies residues 1-21 (MANPQTTRVAVVGAGISGVLA). 13–18 (GAGISG) serves as a coordination point for FAD. A disordered region spans residues 73-93 (EPSYPAMKPSKADPPATNEQE). NADP(+) is bound at residue 250–255 (GGGVSS). Asparagine 459 carries N-linked (GlcNAc...) asparagine glycosylation.

The protein belongs to the FMO family.

Its pathway is mycotoxin biosynthesis. Functionally, flavin-containing monooxygenase; part of the gene cluster that mediates the biosynthesis of the secondary metabolite ustiloxin B, an antimitotic tetrapeptide. First, ustA is processed by the subtilisin-like endoprotease Kex2 that is outside the ustiloxin B gene cluster, at the C-terminal side of Arg-Lys, after transfer to Golgi apparatus through the endoplasmic reticulum (ER). Cleavage by KEX2 generates 16 peptides YAIG-I to YAIG-XVI. To process the precursor peptide further, at least two peptidases are necessary to cleave the N-terminal and C-terminal sides of the Tyr-Ala-Ile-Gly core peptide which serves as backbone for the synthesis of ustiloxin B, through cyclization and modification of the tyrosine with a non-protein coding amino acid, norvaline. One of the two peptidases must be the serine peptidase ustP; and the other pepdidase is probably ustH. Macrocyclization of the core peptide derived from ustA requires the tyrosinase ustQ, as well as the homologous oxidases ustYa and ustYb, and leads to the production of the first cyclization product N-desmethylustiloxin F. For the formation of N-desmethylustiloxin F, three oxidation steps are required, hydroxylation at the benzylic position, hydroxylation at either the aromatic ring of Tyr or beta-position of Ile, and oxidative cyclization. UstQ may catalyze the oxidation of a phenol moiety, whereas the ustYa and ustYb are most likely responsible for the remaining two-step oxidations. N-desmethylustiloxin F is then methylated by ustM to yield ustiloxin F which in turn substrate of the cytochrome P450 monooxygenase ustC which catalyzes the formation of S-deoxyustiloxin H. The flavoprotein monooxygenases ustF1 and ustF2 then participate in the modification of the side chain of S-deoxyustiloxin H, leading to the synthesis of an oxime intermediate, via ustiloxin H. Finally, carboxylative dehydration performed by the cysteine desulfurase-like protein ustD yields ustiloxin B. In Aspergillus flavus (strain ATCC 200026 / FGSC A1120 / IAM 13836 / NRRL 3357 / JCM 12722 / SRRC 167), this protein is Flavin-containing monooxygenase ustF2.